The primary structure comprises 268 residues: MEPCLLMWGILTFITVSGYTTDLCDDDPPNLKHATFKALTYKTGTVLNCDCERGFRRISSYMHCTGNSSHASWENKCRCKSVSPENRKGKVTTKPEEQKGENPTEMQSQTPPMDEVDLVGHCREPPPWEHENSKRIYHFVVGQTLHYQCMQGFTALHRGPAKSICKTIFGKTRWTQPPLKCISESQFPDDEELQASTDAPAGRDTSSPFITTSTPDFHKHTEVATTMESFIFTTEYQIAVASCVLLLISIVLLSGLTWQRRRRKSRTI.

Positions 1–21 are cleaved as a signal peptide; sequence MEPCLLMWGILTFITVSGYTT. Residues 22–81 enclose the Sushi 1 domain; it reads DLCDDDPPNLKHATFKALTYKTGTVLNCDCERGFRRISSYMHCTGNSSHASWENKCRCKS. The Extracellular portion of the chain corresponds to 22–237; sequence DLCDDDPPNL…ESFIFTTEYQ (216 aa). 3 disulfides stabilise this stretch: cysteine 24–cysteine 64, cysteine 49–cysteine 77, and cysteine 51–cysteine 79. Asparagine 67 carries N-linked (GlcNAc...) asparagine glycosylation. The disordered stretch occupies residues 83–112; that stretch reads SPENRKGKVTTKPEEQKGENPTEMQSQTPP. Positions 85–102 are enriched in basic and acidic residues; that stretch reads ENRKGKVTTKPEEQKGEN. The Sushi 2 domain occupies 120-183; the sequence is GHCREPPPWE…WTQPPLKCIS (64 aa). 2 cysteine pairs are disulfide-bonded: cysteine 122–cysteine 165 and cysteine 149–cysteine 181. The disordered stretch occupies residues 186–213; sequence QFPDDEELQASTDAPAGRDTSSPFITTS. Polar residues predominate over residues 204–213; the sequence is DTSSPFITTS. A helical membrane pass occupies residues 238-258; sequence IAVASCVLLLISIVLLSGLTW. Residues 259–268 are Cytoplasmic-facing; sequence QRRRRKSRTI.

Non-covalent dimer of an alpha and a beta subunit. IL2R exists in 3 different forms: a high affinity dimer, an intermediate affinity monomer (beta subunit), and a low affinity monomer (alpha subunit). The high and intermediate affinity forms also associate with a gamma subunit.

Its subcellular location is the membrane. Its function is as follows. Receptor for interleukin-2. The receptor is involved in the regulation of immune tolerance by controlling regulatory T cells (TREGs) activity. TREGs suppress the activation and expansion of autoreactive T-cells. The sequence is that of Interleukin-2 receptor subunit alpha (IL2RA) from Canis lupus familiaris (Dog).